We begin with the raw amino-acid sequence, 65 residues long: uncharacterized protein (65 aa).

This is an uncharacterized protein from Escherichia coli (Bacteriophage T4).